Consider the following 155-residue polypeptide: Xanthine-guanine phosphoribosyltransferase 2 (155 aa).

Residues 37 to 38 (RG) and 91 to 99 (DDLVDTGNT) each bind 5-phospho-alpha-D-ribose 1-diphosphate. Asp-92 lines the Mg(2+) pocket. Residues Asp-95 and Ile-138 each contribute to the guanine site. Xanthine contacts are provided by Asp-95 and Ile-138. GMP-binding positions include 95 to 99 (DTGNT) and 137 to 138 (WI).

This sequence belongs to the purine/pyrimidine phosphoribosyltransferase family. XGPT subfamily. Homotetramer. Mg(2+) is required as a cofactor.

The protein resides in the cell inner membrane. The enzyme catalyses GMP + diphosphate = guanine + 5-phospho-alpha-D-ribose 1-diphosphate. It catalyses the reaction XMP + diphosphate = xanthine + 5-phospho-alpha-D-ribose 1-diphosphate. The catalysed reaction is IMP + diphosphate = hypoxanthine + 5-phospho-alpha-D-ribose 1-diphosphate. It functions in the pathway purine metabolism; GMP biosynthesis via salvage pathway; GMP from guanine: step 1/1. Its pathway is purine metabolism; XMP biosynthesis via salvage pathway; XMP from xanthine: step 1/1. Its function is as follows. Purine salvage pathway enzyme that catalyzes the transfer of the ribosyl-5-phosphate group from 5-phospho-alpha-D-ribose 1-diphosphate (PRPP) to the N9 position of the 6-oxopurines guanine and xanthine to form the corresponding ribonucleotides GMP (guanosine 5'-monophosphate) and XMP (xanthosine 5'-monophosphate), with the release of PPi. To a lesser extent, also acts on hypoxanthine. This chain is Xanthine-guanine phosphoribosyltransferase 2, found in Haemophilus influenzae (strain 86-028NP).